Here is a 213-residue protein sequence, read N- to C-terminus: Orotate phosphoribosyltransferase (213 aa).

K26 contributes to the 5-phospho-alpha-D-ribose 1-diphosphate binding site. An orotate-binding site is contributed by 34–35; that stretch reads FF. 5-phospho-alpha-D-ribose 1-diphosphate contacts are provided by residues 72 to 73, R99, K100, K103, H105, and 124 to 132; these read YK and DDVITAGTA. Positions 128 and 156 each coordinate orotate.

This sequence belongs to the purine/pyrimidine phosphoribosyltransferase family. PyrE subfamily. In terms of assembly, homodimer. It depends on Mg(2+) as a cofactor.

The enzyme catalyses orotidine 5'-phosphate + diphosphate = orotate + 5-phospho-alpha-D-ribose 1-diphosphate. It functions in the pathway pyrimidine metabolism; UMP biosynthesis via de novo pathway; UMP from orotate: step 1/2. In terms of biological role, catalyzes the transfer of a ribosyl phosphate group from 5-phosphoribose 1-diphosphate to orotate, leading to the formation of orotidine monophosphate (OMP). The sequence is that of Orotate phosphoribosyltransferase from Pseudomonas syringae pv. syringae (strain B728a).